The following is a 404-amino-acid chain: Zinc metalloprotease Rip1 (404 aa).

A helical transmembrane segment spans residues 1–21 (MMFVTGIVLFALAILISVALH). His-21 contacts Zn(2+). Glu-22 is an active-site residue. His-25 provides a ligand contact to Zn(2+). Residues 104–124 (PGMNLAICLVLIYAIALVWGL) traverse the membrane as a helical segment. A PDZ domain is found at 121-203 (VWGLPNLHPP…SVPIVVERDG (83 aa)). Asp-202 serves as a coordination point for Zn(2+). 2 helical membrane passes run 313–333 (LWVA…TINL) and 373–393 (LLPA…LTVT).

It belongs to the peptidase M50B family. The cofactor is Zn(2+).

It is found in the cell membrane. In terms of biological role, a probable intramembrane site-2 protease (S2P) that cleaves type-2 transmembrane proteins within their membrane-spanning domains. Cleaves PbpB (PBP3, FtsI); cleavage is inhibited by Wag31-PbpB interaction. Probably also cleaves anti-sigma factors RskA, RslA and RsmA. Its function is as follows. Regulated intramembrane proteolysis (RIP) occurs when an extracytoplasmic signal (possibly oxidative stress) triggers a concerted proteolytic cascade to transmit information and elicit cellular responses. The membrane-spanning regulatory substrate protein (includes anti-sigma factors RskA, RslA, RsmA, and PbpB in M.tuberculosis) is first cut extracytoplasmically (site-1 protease, S1P), then within the membrane itself (site-2 protease, S2P, this entry), while cytoplasmic proteases finish degrading the regulatory protein, liberating the effector protein (ECF sigma factors SigK, SigL and SigM). This is Zinc metalloprotease Rip1 (rip1) from Mycobacterium bovis (strain BCG / Pasteur 1173P2).